Consider the following 331-residue polypeptide: PHD finger protein 11 (331 aa).

The C2HC pre-PHD-type zinc-finger motif lies at 42–78; it reads KRTCALCPKDVEYNVLYFAQSENIAAHENCLLYSSGL. The segment at 108-160 adopts a PHD-type zinc-finger fold; that stretch reads LKCKFCHKRGATVGCDLKNCNKNYHFFCAKKDDAVPQSDGVRGIYKLLCQQHA.

Interacts with BRCA1 and RELA. In terms of tissue distribution, highly expressed in T and B-cells, as well as natural killer and mature dendritic cells. Expressed at higher levels in Th1 as compared to Th2 cells. Expressed at low levels in all normal tissues tested, including lung, testis, small intestine, breast, liver and placenta.

The protein resides in the nucleus. Its function is as follows. Positive regulator of Th1-type cytokine gene expression. This Homo sapiens (Human) protein is PHD finger protein 11 (PHF11).